The sequence spans 377 residues: Bifunctional enzyme IspD/IspF (377 aa).

Positions 1–221 (MTTAAIIVAA…ERILRQDMDV (221 aa)) are 2-C-methyl-D-erythritol 4-phosphate cytidylyltransferase. The tract at residues 222 to 377 (RLGNGYDVHR…ALATACLVKP (156 aa)) is 2-C-methyl-D-erythritol 2,4-cyclodiphosphate synthase. A divalent metal cation is bound by residues Asp228 and His230. Residues 228-230 (DVH) and 254-255 (HS) contribute to the 4-CDP-2-C-methyl-D-erythritol 2-phosphate site. His262 contributes to the a divalent metal cation binding site. Residues 276–278 (DIG), 352–355 (TTSE), Phe359, and Arg362 contribute to the 4-CDP-2-C-methyl-D-erythritol 2-phosphate site.

The protein in the N-terminal section; belongs to the IspD/TarI cytidylyltransferase family. IspD subfamily. This sequence in the C-terminal section; belongs to the IspF family. A divalent metal cation serves as cofactor.

It carries out the reaction 2-C-methyl-D-erythritol 4-phosphate + CTP + H(+) = 4-CDP-2-C-methyl-D-erythritol + diphosphate. It catalyses the reaction 4-CDP-2-C-methyl-D-erythritol 2-phosphate = 2-C-methyl-D-erythritol 2,4-cyclic diphosphate + CMP. It functions in the pathway isoprenoid biosynthesis; isopentenyl diphosphate biosynthesis via DXP pathway; isopentenyl diphosphate from 1-deoxy-D-xylulose 5-phosphate: step 2/6. It participates in isoprenoid biosynthesis; isopentenyl diphosphate biosynthesis via DXP pathway; isopentenyl diphosphate from 1-deoxy-D-xylulose 5-phosphate: step 4/6. Bifunctional enzyme that catalyzes the formation of 4-diphosphocytidyl-2-C-methyl-D-erythritol from CTP and 2-C-methyl-D-erythritol 4-phosphate (MEP) (IspD), and catalyzes the conversion of 4-diphosphocytidyl-2-C-methyl-D-erythritol 2-phosphate (CDP-ME2P) to 2-C-methyl-D-erythritol 2,4-cyclodiphosphate (ME-CPP) with a corresponding release of cytidine 5-monophosphate (CMP) (IspF). In Ruegeria pomeroyi (strain ATCC 700808 / DSM 15171 / DSS-3) (Silicibacter pomeroyi), this protein is Bifunctional enzyme IspD/IspF.